Consider the following 548-residue polypeptide: Membrane protein insertase YidC (548 aa).

A helical membrane pass occupies residues 6-26 (NLLVIALLFVSFMIWQAWEQD). The segment at 28-55 (NPQPQAQQTTQTTTTAAGSAADQGVPAS) is disordered. A compositionally biased stretch (low complexity) spans 30–50 (QPQAQQTTQTTTTAAGSAADQ). 4 helical membrane-spanning segments follow: residues 350 to 370 (FVGNWGFSIIIITFIVRGIMY), 420 to 440 (LGGCFPLLIQMPIFLALYYML), 458 to 478 (LSAQDPYYILPILMGVTMFFI), and 499 to 519 (PVIFTVFFLWFPSGLVLYYIV).

The protein belongs to the OXA1/ALB3/YidC family. Type 1 subfamily. Interacts with the Sec translocase complex via SecD. Specifically interacts with transmembrane segments of nascent integral membrane proteins during membrane integration.

The protein resides in the cell inner membrane. In terms of biological role, required for the insertion and/or proper folding and/or complex formation of integral membrane proteins into the membrane. Involved in integration of membrane proteins that insert both dependently and independently of the Sec translocase complex, as well as at least some lipoproteins. Aids folding of multispanning membrane proteins. This Escherichia coli (strain K12 / MC4100 / BW2952) protein is Membrane protein insertase YidC.